Here is a 403-residue protein sequence, read N- to C-terminus: F-box only protein 22 (403 aa).

Residue Met1 is modified to N-acetylmethionine. The 53-residue stretch at Ser19–Ala71 folds into the F-box domain. At Ser128 the chain carries Phosphoserine. N6-acetyllysine is present on Lys194.

As to quaternary structure, directly interacts with SKP1 and CUL1.

The protein localises to the cytoplasm. It localises to the myofibril. It is found in the sarcomere. Its subcellular location is the z line. Its function is as follows. Substrate-recognition component of the SCF (SKP1-CUL1-F-box protein)-type E3 ubiquitin ligase complex. Promotes the proteasome-dependent degradation of key sarcomeric proteins, such as alpha-actinin (ACTN2) and filamin-C (FLNC), essential for maintenance of normal contractile function. In Pongo abelii (Sumatran orangutan), this protein is F-box only protein 22 (FBXO22).